We begin with the raw amino-acid sequence, 274 residues long: NH(3)-dependent NAD(+) synthetase (274 aa).

An ATP-binding site is contributed by 46-53; that stretch reads GISGGQDS. Residue D52 participates in Mg(2+) binding. R140 contributes to the deamido-NAD(+) binding site. Residue T160 coordinates ATP. E165 contacts Mg(2+). Deamido-NAD(+)-binding residues include K173 and D180. Residues K189 and T211 each contribute to the ATP site. 260–261 serves as a coordination point for deamido-NAD(+); sequence HK.

It belongs to the NAD synthetase family. Homodimer.

The catalysed reaction is deamido-NAD(+) + NH4(+) + ATP = AMP + diphosphate + NAD(+) + H(+). It functions in the pathway cofactor biosynthesis; NAD(+) biosynthesis; NAD(+) from deamido-NAD(+) (ammonia route): step 1/1. Its function is as follows. Catalyzes the ATP-dependent amidation of deamido-NAD to form NAD. Uses ammonia as a nitrogen source. The chain is NH(3)-dependent NAD(+) synthetase from Lactococcus lactis subsp. lactis (strain IL1403) (Streptococcus lactis).